Reading from the N-terminus, the 224-residue chain is Ras-related protein Rab-32C (224 aa).

Residues 1 to 22 form a disordered region; it reads MYSNKNDKDKDKDQNNENNKNN. 35 to 42 contacts GTP; the sequence is GKLACGKT. Residues 57-65 carry the Effector region motif; it reads YKPTIGVDF. GTP is bound by residues 83–87 and 142–145; these read DIAGQ and NKCD. The segment at 203 to 224 is disordered; the sequence is GFKLSDQSQSTETTPTQSKTCC. A compositionally biased stretch (low complexity) spans 209-224; sequence QSQSTETTPTQSKTCC. 2 S-geranylgeranyl cysteine lipidation sites follow: Cys-223 and Cys-224.

It belongs to the small GTPase superfamily. Rab family.

In Dictyostelium discoideum (Social amoeba), this protein is Ras-related protein Rab-32C (rab32C).